The sequence spans 88 residues: U-scoloptoxin(XY)-Er1a (88 aa).

A signal peptide spans M1–S24. The tract at residues R66–A88 is disordered. A propeptide spanning residues E79–A88 is cleaved from the precursor.

This sequence belongs to the scoloptoxin-XY family. In terms of processing, contains 3 disulfide bonds. As to expression, expressed by the venom gland.

It localises to the secreted. The polypeptide is U-scoloptoxin(XY)-Er1a (Ethmostigmus rubripes (Giant centipede)).